The primary structure comprises 149 residues: NPC intracellular cholesterol transporter 2 (149 aa).

Residues 1 to 19 (MRFLAATILLLALVAASQA) form the signal peptide. 3 cysteine pairs are disulfide-bonded: Cys27-Cys140, Cys42-Cys47, and Cys93-Cys99. Residues Asn58 and Asn69 are each glycosylated (N-linked (GlcNAc...) asparagine). An N6-acetyllysine modification is found at Lys116.

It belongs to the NPC2 family. In terms of assembly, interacts with NPC1 (via the second lumenal domain) in a cholestrol-dependent manner. Interacts with NUS1/NgBR, the interaction stabilizes NCP2 and regulates cholesterol trafficking. Interacts with DHDDS. Interacts with NEDD4L (via C2 domain). Interacts with NPC1L1. N-glycosylated. As to expression, detected in liver and bile. Detected in epididymis (at protein level). Detected in caput epididymis, corpus epididymis, cauda epididymis and ovary.

The protein localises to the secreted. Its subcellular location is the endoplasmic reticulum. It localises to the lysosome. It carries out the reaction cholesterol(in) = cholesterol(out). Functionally, intracellular cholesterol transporter which acts in concert with NPC1 and plays an important role in the egress of cholesterol from the lysosomal compartment. Unesterified cholesterol that has been released from LDLs in the lumen of the late endosomes/lysosomes is transferred by NPC2 to the cholesterol-binding pocket in the N-terminal domain of NPC1. May bind and mobilize cholesterol that is associated with membranes. NPC2 binds cholesterol with a 1:1 stoichiometry. Can bind a variety of sterols, including lathosterol, desmosterol and the plant sterols stigmasterol and beta-sitosterol. The secreted form of NCP2 regulates biliary cholesterol secretion via stimulation of ABCG5/ABCG8-mediated cholesterol transport. This chain is NPC intracellular cholesterol transporter 2, found in Mus musculus (Mouse).